The primary structure comprises 105 residues: Protein AlbB (105 aa).

Its function is as follows. Involved in the biosynthesis of albonoursin (cyclo[(alpha,beta-dehydro-Phe)-(alpha,beta-dehydro-Leu)]), an antibacterial peptide. AlbB is essential for cyclic dipeptide oxidase AlbA (CDO) activity. This is Protein AlbB (albB) from Streptomyces noursei (Streptomyces albulus).